Reading from the N-terminus, the 223-residue chain is Pyridoxal phosphate homeostasis protein (223 aa).

An N6-(pyridoxal phosphate)lysine modification is found at Lys-36.

Belongs to the pyridoxal phosphate-binding protein YggS/PROSC family. Monomer.

Pyridoxal 5'-phosphate (PLP)-binding protein, which is involved in PLP homeostasis. The chain is Pyridoxal phosphate homeostasis protein from Buchnera aphidicola subsp. Baizongia pistaciae (strain Bp).